Consider the following 437-residue polypeptide: Protein translocase subunit SecY (437 aa).

A run of 10 helical transmembrane segments spans residues 19-39 (LFTL…IPGV), 69-89 (LLQI…SIIL), 122-142 (VALA…GALF), 157-177 (IFTT…VMWL), 189-209 (GMSI…LWAI), 219-239 (WIEF…VVFV), 275-295 (GVIP…IVQF), 318-338 (HIIL…AISF), 378-398 (GSLY…GFGA), and 400-420 (QNFP…LETV).

The protein belongs to the SecY/SEC61-alpha family. In terms of assembly, component of the Sec protein translocase complex. Heterotrimer consisting of SecY, SecE and SecG subunits. The heterotrimers can form oligomers, although 1 heterotrimer is thought to be able to translocate proteins. Interacts with the ribosome. Interacts with SecDF, and other proteins may be involved. Interacts with SecA.

It is found in the cell membrane. In terms of biological role, the central subunit of the protein translocation channel SecYEG. Consists of two halves formed by TMs 1-5 and 6-10. These two domains form a lateral gate at the front which open onto the bilayer between TMs 2 and 7, and are clamped together by SecE at the back. The channel is closed by both a pore ring composed of hydrophobic SecY resides and a short helix (helix 2A) on the extracellular side of the membrane which forms a plug. The plug probably moves laterally to allow the channel to open. The ring and the pore may move independently. This Streptomyces coelicolor (strain ATCC BAA-471 / A3(2) / M145) protein is Protein translocase subunit SecY.